Here is a 152-residue protein sequence, read N- to C-terminus: MPSSDHWLQLQRNVRFGETDAAGVVHFYQLFRWCHEAWEESLARYGIAAAAIFPGCRDICQVPTVALPVVHCEADFQRPVHGGDDLRILLEPQRLNPGCFEVKYRFQLEDMDVARGLIRHLAIESESRRRCALPEPIDLWLEASTVGRLEPI.

Asp20 is an active-site residue.

Belongs to the 4-hydroxybenzoyl-CoA thioesterase family. DHNA-CoA hydrolase subfamily.

It carries out the reaction 1,4-dihydroxy-2-naphthoyl-CoA + H2O = 1,4-dihydroxy-2-naphthoate + CoA + H(+). It participates in cofactor biosynthesis; phylloquinone biosynthesis. It functions in the pathway quinol/quinone metabolism; 1,4-dihydroxy-2-naphthoate biosynthesis; 1,4-dihydroxy-2-naphthoate from chorismate: step 7/7. Catalyzes the hydrolysis of 1,4-dihydroxy-2-naphthoyl-CoA (DHNA-CoA) to 1,4-dihydroxy-2-naphthoate (DHNA), a reaction involved in phylloquinone (vitamin K1) biosynthesis. The sequence is that of 1,4-dihydroxy-2-naphthoyl-CoA hydrolase from Synechococcus sp. (strain CC9311).